The primary structure comprises 294 residues: Phosphoribosylaminoimidazole-succinocarboxamide synthase (294 aa).

The protein belongs to the SAICAR synthetase family.

The catalysed reaction is 5-amino-1-(5-phospho-D-ribosyl)imidazole-4-carboxylate + L-aspartate + ATP = (2S)-2-[5-amino-1-(5-phospho-beta-D-ribosyl)imidazole-4-carboxamido]succinate + ADP + phosphate + 2 H(+). It functions in the pathway purine metabolism; IMP biosynthesis via de novo pathway; 5-amino-1-(5-phospho-D-ribosyl)imidazole-4-carboxamide from 5-amino-1-(5-phospho-D-ribosyl)imidazole-4-carboxylate: step 1/2. In Thermoplasma volcanium (strain ATCC 51530 / DSM 4299 / JCM 9571 / NBRC 15438 / GSS1), this protein is Phosphoribosylaminoimidazole-succinocarboxamide synthase.